The chain runs to 1032 residues: GPI ethanolamine phosphate transferase 1 (1032 aa).

The Cytoplasmic portion of the chain corresponds to 1–6 (MARLGR). The helical transmembrane segment at 7-27 (FGFLALAVVFHLIYAYSIFDI) threads the bilayer. The Lumenal segment spans residues 28–468 (YFVSPIVSGM…LQTYDWLFLR (441 aa)). N-linked (GlcNAc...) asparagine glycans are attached at residues N150 and N435. The chain crosses the membrane as a helical span at residues 469-489 (TIITFGYLGWIAYALTTVIDL). The Cytoplasmic segment spans residues 490–500 (HVLHRTSDSKR). A helical transmembrane segment spans residues 501-521 (TVGSTIFFTSILAALFSVLLY). Over 522–523 (QK) the chain is Lumenal. The helical transmembrane segment at 524-544 (SSWQYYVYGAFPIFFWEEVFA) threads the bilayer. Topologically, residues 545–564 (RRKALIAGREILLGHVRSFG) are cytoplasmic. Residues 565–585 (GYIASGFQLVAFVAVLEALLM) form a helical membrane-spanning segment. Residues 586–596 (RHQVQSYFHRE) are Lumenal-facing. The helical transmembrane segment at 597–617 (IYTVCFVLGSFWPILYGVDFV) threads the bilayer. Residues 618-622 (RQNTV) lie on the Cytoplasmic side of the membrane. The helical transmembrane segment at 623-643 (LSATWAVGCSLMSTFTLLPVI) threads the bilayer. The Lumenal portion of the chain corresponds to 644–647 (KVEN). Residues 648–668 (INTITYGALLMFFTGLFYLLF) traverse the membrane as a helical segment. Topologically, residues 669 to 688 (EDTILKHSKSSGHAPGAISS) are cytoplasmic. A helical membrane pass occupies residues 689–709 (LGSRVIMGMQVGMVLLALIVT). At 710 to 722 (RSSVSSLQAKQGL) the chain is on the lumenal side. A helical transmembrane segment spans residues 723-743 (PFGNQVVGWFVLVASLVLPFF). Residues 744–766 (HRLYPNSHYLHRLMVLFLTFSPT) are Cytoplasmic-facing. Residues 767-787 (FIILTISYEGLFYFVFCMTLV) traverse the membrane as a helical segment. Residues 788–841 (TWVRLEHAIYVYTARSSAHYGGNNTVPKKPGLNATAVIDGQEYRYRRLGLADTR) lie on the Lumenal side of the membrane. N810 and N820 each carry an N-linked (GlcNAc...) asparagine glycan. The helical transmembrane segment at 842-862 (VALFFFFLLQSAFFSTGNIAS) threads the bilayer. At 863 to 884 (VSSFSLESVFRLIPVFSPFSQS) the chain is on the cytoplasmic side. Residues 885–905 (ALLILKLLIPFAIISANLGIL) traverse the membrane as a helical segment. At 906 to 914 (NRRLEVAPS) the chain is on the lumenal side. Residues 915–935 (ALFMVVMSISDVMTLNFFYMV) traverse the membrane as a helical segment. At 936–951 (RDEGSWLDIGTTISHF) the chain is on the cytoplasmic side. A helical transmembrane segment spans residues 952–972 (LIASFLCTFVAGLEFLSEVFI). Over 973 to 1032 (SGVDFGPTTKAIGASITKTVGGTAGSDVVDSQSGPEDAANSKKAEGLEGSETIRQNGGSV) the chain is Lumenal. The interval 994-1032 (GTAGSDVVDSQSGPEDAANSKKAEGLEGSETIRQNGGSV) is disordered.

This sequence belongs to the PIGG/PIGN/PIGO family. PIGN subfamily.

Its subcellular location is the endoplasmic reticulum membrane. It participates in glycolipid biosynthesis; glycosylphosphatidylinositol-anchor biosynthesis. Functionally, ethanolamine phosphate transferase involved in glycosylphosphatidylinositol-anchor biosynthesis. Transfers ethanolamine phosphate to the first alpha-1,4-linked mannose of the glycosylphosphatidylinositol precursor of GPI-anchor. This chain is GPI ethanolamine phosphate transferase 1 (mcd4), found in Aspergillus fumigatus (strain ATCC MYA-4609 / CBS 101355 / FGSC A1100 / Af293) (Neosartorya fumigata).